Consider the following 364-residue polypeptide: DNA replication and repair protein RecF (364 aa).

ATP is bound at residue 30–37; that stretch reads GENGSGKT.

Belongs to the RecF family.

It localises to the cytoplasm. Functionally, the RecF protein is involved in DNA metabolism; it is required for DNA replication and normal SOS inducibility. RecF binds preferentially to single-stranded, linear DNA. It also seems to bind ATP. This is DNA replication and repair protein RecF from Pseudoalteromonas translucida (strain TAC 125).